We begin with the raw amino-acid sequence, 288 residues long: Stage IV sporulation protein FB (288 aa).

At M1–K10 the chain is on the mother cell cytoplasmic side. A helical transmembrane segment spans residues I11–M30. Residue K31 is a topological domain, forespore intermembrane space. A helical transmembrane segment spans residues A32 to W56. Zn(2+) is bound at residue H43. E44 is an active-site residue. Residue H47 coordinates Zn(2+). The Mother cell cytoplasmic segment spans residues R57–E83. The helical transmembrane segment at F84 to A105 threads the bilayer. Over E106–L126 the chain is Forespore intermembrane space. The helical transmembrane segment at F127 to F146 threads the bilayer. Position 137 (D137) interacts with Zn(2+). Residues S147–K161 are Mother cell cytoplasmic-facing. The helical transmembrane segment at T162–I178 threads the bilayer. Position 179 (P179) is a topological domain, forespore intermembrane space. Residues L180–Y199 traverse the membrane as a helical segment. The Mother cell cytoplasmic segment spans residues R200 to Y288.

It belongs to the peptidase M50B family. Forms a complex with SpoIVFA and BofA localized in the mother-cell membrane surrounding the forespore. The cofactor is Zn(2+).

The protein localises to the forespore outer membrane. Functionally, implicated in the coupling of mother cell to forespore gene expression. Required for spore formation. Processes the pro-sigma K factor. This Bacillus subtilis (strain 168) protein is Stage IV sporulation protein FB (spoIVFB).